Reading from the N-terminus, the 395-residue chain is Nitrite extrusion protein (395 aa).

A run of 12 helical transmembrane segments spans residues 15 to 35 (SLVAGFMVWVLISSLISQITL), 44 to 64 (ISLVTAIPVILGSLLRIPLGY), 73 to 93 (LMFMVSFILLLFPVFWISIAD), 96 to 116 (FDLIAGGFFLGIGGAVFSIGV), 133 to 153 (GIYGAGNIGTAVTTFAAPVIA), 160 to 180 (STVQMYLILLAVFALLHVLFG), 203 to 223 (VLWFLSLFYFITFGAFVAFTI), 240 to 262 (AGLRTAGFIAVSTLLRPAGGFLA), 271 to 291 (LMFVFAGLTLSGIILSFSPTI), 293 to 313 (LYTFGSLTVAVCSGIGNGTVF), 330 to 350 (IVSAMGGLGGFFPPLILASVF), and 357 to 377 (AIGFMALSEVALASFVLVIWM).

This sequence belongs to the major facilitator superfamily. Nitrate/nitrite porter (TC 2.A.1.8) family.

The protein resides in the cell membrane. Involved in excretion of nitrite produced by the dissimilatory reduction of nitrate. This Bacillus subtilis (strain 168) protein is Nitrite extrusion protein (narK).